Reading from the N-terminus, the 101-residue chain is Osteocalcin (101 aa).

Residues 1–18 (MKLAIVLLLLGLAVLCLG) form the signal peptide. A propeptide spanning residues 19–52 (GKDSQHSASAGDSRSSEAFISRQDSANFARRHKR) is cleaved from the precursor. Residues 53 to 99 (SYRYNVARGAAVTSPLESQREVCELNPDCDELADHIGFQEAYRRFYG) enclose the Gla domain. Ca(2+)-binding residues include glutamate 69, glutamate 73, glutamate 76, and aspartate 82. Glutamate 69, glutamate 73, and glutamate 76 each carry 4-carboxyglutamate. The cysteines at positions 75 and 81 are disulfide-linked.

The protein belongs to the osteocalcin/matrix Gla protein family. Gamma-carboxyglutamate residues are formed by vitamin K dependent carboxylation by GGCX. These residues are essential for the binding of calcium.

It localises to the secreted. Its function is as follows. The carboxylated form is one of the main organic components of the bone matrix, which constitutes 1-2% of the total bone protein. The carboxylated form binds strongly to apatite and calcium. The sequence is that of Osteocalcin (bglap) from Xenopus tropicalis (Western clawed frog).